A 385-amino-acid polypeptide reads, in one-letter code: Putative glutamate--cysteine ligase 2 (385 aa).

This sequence belongs to the glutamate--cysteine ligase type 2 family. YbdK subfamily.

It catalyses the reaction L-cysteine + L-glutamate + ATP = gamma-L-glutamyl-L-cysteine + ADP + phosphate + H(+). In terms of biological role, ATP-dependent carboxylate-amine ligase which exhibits weak glutamate--cysteine ligase activity. The polypeptide is Putative glutamate--cysteine ligase 2 (Solibacter usitatus (strain Ellin6076)).